Reading from the N-terminus, the 350-residue chain is MSNPLSPLLKPAAALYRTVVRMRNLGFEKKLFKTWKAPLPVVSIGNISAGGTGKTPLADWIINYCLSVGSEPALLSRGYGRTTKGVQLVSDGQRILLDSREAGDETSMLAARNPGIIVVVAEKRKEGVEFILKRFGTRMPSLIILDDAFQHRQIARDLDIVIINAAEPYCNARMLPEGRLREPLGNIRRAGLIVLNKITDRNAADAIACDLKKTGIPVVLAKTEAGELVPFGEDAGERNMNGIRAFAFAGIGSPEGFLGSLKEKGIQVEAHRFFRDHEPYSGDKLLPILLEAEKKGLSLVTTEKDYFRLLGEHELTATLSVLPCYYLKISTRFLEGEEILASMLNKVIFS.

Ser48–Thr55 serves as a coordination point for ATP.

This sequence belongs to the LpxK family.

It carries out the reaction a lipid A disaccharide + ATP = a lipid IVA + ADP + H(+). The protein operates within glycolipid biosynthesis; lipid IV(A) biosynthesis; lipid IV(A) from (3R)-3-hydroxytetradecanoyl-[acyl-carrier-protein] and UDP-N-acetyl-alpha-D-glucosamine: step 6/6. Transfers the gamma-phosphate of ATP to the 4'-position of a tetraacyldisaccharide 1-phosphate intermediate (termed DS-1-P) to form tetraacyldisaccharide 1,4'-bis-phosphate (lipid IVA). This is Tetraacyldisaccharide 4'-kinase from Chlorobium limicola (strain DSM 245 / NBRC 103803 / 6330).